The following is a 477-amino-acid chain: Aspartyl/glutamyl-tRNA(Asn/Gln) amidotransferase subunit B (477 aa).

The protein belongs to the GatB/GatE family. GatB subfamily. As to quaternary structure, heterotrimer of A, B and C subunits.

It catalyses the reaction L-glutamyl-tRNA(Gln) + L-glutamine + ATP + H2O = L-glutaminyl-tRNA(Gln) + L-glutamate + ADP + phosphate + H(+). The catalysed reaction is L-aspartyl-tRNA(Asn) + L-glutamine + ATP + H2O = L-asparaginyl-tRNA(Asn) + L-glutamate + ADP + phosphate + 2 H(+). Functionally, allows the formation of correctly charged Asn-tRNA(Asn) or Gln-tRNA(Gln) through the transamidation of misacylated Asp-tRNA(Asn) or Glu-tRNA(Gln) in organisms which lack either or both of asparaginyl-tRNA or glutaminyl-tRNA synthetases. The reaction takes place in the presence of glutamine and ATP through an activated phospho-Asp-tRNA(Asn) or phospho-Glu-tRNA(Gln). This is Aspartyl/glutamyl-tRNA(Asn/Gln) amidotransferase subunit B from Ligilactobacillus salivarius (strain UCC118) (Lactobacillus salivarius).